A 184-amino-acid chain; its full sequence is Protein GrpE (184 aa).

The tract at residues 1 to 26 (MTAPQEPVDSTPESGENAATPGLEDD) is disordered.

Belongs to the GrpE family. As to quaternary structure, homodimer.

The protein resides in the cytoplasm. Functionally, participates actively in the response to hyperosmotic and heat shock by preventing the aggregation of stress-denatured proteins, in association with DnaK and GrpE. It is the nucleotide exchange factor for DnaK and may function as a thermosensor. Unfolded proteins bind initially to DnaJ; upon interaction with the DnaJ-bound protein, DnaK hydrolyzes its bound ATP, resulting in the formation of a stable complex. GrpE releases ADP from DnaK; ATP binding to DnaK triggers the release of the substrate protein, thus completing the reaction cycle. Several rounds of ATP-dependent interactions between DnaJ, DnaK and GrpE are required for fully efficient folding. This chain is Protein GrpE, found in Bordetella bronchiseptica (strain ATCC BAA-588 / NCTC 13252 / RB50) (Alcaligenes bronchisepticus).